Consider the following 283-residue polypeptide: Nucleotide-binding protein Sama_3091 (283 aa).

An ATP-binding site is contributed by 8–15; that stretch reads GRSGSGKS. 56–59 contributes to the GTP binding site; that stretch reads DIRN.

The protein belongs to the RapZ-like family.

Functionally, displays ATPase and GTPase activities. This chain is Nucleotide-binding protein Sama_3091, found in Shewanella amazonensis (strain ATCC BAA-1098 / SB2B).